Reading from the N-terminus, the 313-residue chain is Peptidyl-prolyl cis-trans isomerase 9 (313 aa).

The 166-residue stretch at 9–174 (FLDMALDEKP…AKVRIFNSGE (166 aa)) folds into the PPIase cyclophilin-type domain. 2 stretches are compositionally biased toward basic and acidic residues: residues 216 to 230 (EERE…ESSR) and 253 to 269 (RGDR…KDDF). 2 disordered regions span residues 216-274 (EERE…IAVR) and 288-313 (TPEH…DLQP).

This sequence belongs to the cyclophilin-type PPIase family.

It catalyses the reaction [protein]-peptidylproline (omega=180) = [protein]-peptidylproline (omega=0). PPIases accelerate the folding of proteins. It catalyzes the cis-trans isomerization of proline imid ic peptide bonds in oligopeptides. Thought to function as a catalyst in the folding and modification of cuticle collagens. The sequence is that of Peptidyl-prolyl cis-trans isomerase 9 from Caenorhabditis briggsae.